Consider the following 413-residue polypeptide: Serine hydroxymethyltransferase (413 aa).

Residues L117 and 121–123 (GHL) contribute to the (6S)-5,6,7,8-tetrahydrofolate site. Position 226 is an N6-(pyridoxal phosphate)lysine (K226). Position 349-351 (349-351 (SPF)) interacts with (6S)-5,6,7,8-tetrahydrofolate.

It belongs to the SHMT family. Homodimer. Pyridoxal 5'-phosphate serves as cofactor.

Its subcellular location is the cytoplasm. The catalysed reaction is (6R)-5,10-methylene-5,6,7,8-tetrahydrofolate + glycine + H2O = (6S)-5,6,7,8-tetrahydrofolate + L-serine. Its pathway is one-carbon metabolism; tetrahydrofolate interconversion. It participates in amino-acid biosynthesis; glycine biosynthesis; glycine from L-serine: step 1/1. Functionally, catalyzes the reversible interconversion of serine and glycine with tetrahydrofolate (THF) serving as the one-carbon carrier. This reaction serves as the major source of one-carbon groups required for the biosynthesis of purines, thymidylate, methionine, and other important biomolecules. Also exhibits THF-independent aldolase activity toward beta-hydroxyamino acids, producing glycine and aldehydes, via a retro-aldol mechanism. In Listeria monocytogenes serotype 4b (strain F2365), this protein is Serine hydroxymethyltransferase.